A 148-amino-acid polypeptide reads, in one-letter code: Putative ankyrin repeat protein RF_1158 (148 aa).

An ANK repeat occupies 82 to 115 (RPTTALGIAIAQGNSEEVIKYLLANGADPKLAFD).

This is Putative ankyrin repeat protein RF_1158 from Rickettsia felis (strain ATCC VR-1525 / URRWXCal2) (Rickettsia azadi).